Here is a 196-residue protein sequence, read N- to C-terminus: Peroxiredoxin TSA1 (196 aa).

One can recognise a Thioredoxin domain in the interval 3-161; it reads AQVQKQAPTF…ALRLVEAFQW (159 aa). K14 participates in a covalent cross-link: Glycyl lysine isopeptide (Lys-Gly) (interchain with G-Cter in ubiquitin). Position 45 to 47 (45 to 47) interacts with substrate; it reads TFV. The active-site Cysteine sulfenic acid (-SOH) intermediate is C48. A Glycyl lysine isopeptide (Lys-Gly) (interchain with G-Cter in ubiquitin) cross-link involves residue K89. Residue R124 participates in substrate binding. Residue K132 forms a Glycyl lysine isopeptide (Lys-Gly) (interchain with G-Cter in ubiquitin) linkage. Residue T174 is modified to Phosphothreonine.

Belongs to the peroxiredoxin family. AhpC/Prx1 subfamily. Homodimer; disulfide-linked, upon oxidation. Interacts with YAP1 via transient disulfide linkages. Post-translationally, the enzyme can be inactivated by further oxidation of the cysteine sulfenic acid (C(P)-SOH) to sulphinic acid (C(P)-SO2H) instead of its condensation to a disulfide bond. It can be reactivated by forming a transient disulfide bond with sulfiredoxin SRX1, which reduces the cysteine sulfinic acid in an ATP- and Mg-dependent manner.

It is found in the cytoplasm. It catalyses the reaction a hydroperoxide + [thioredoxin]-dithiol = an alcohol + [thioredoxin]-disulfide + H2O. In terms of biological role, thiol-specific peroxidase that catalyzes the reduction of hydrogen peroxide and organic hydroperoxides to water and alcohols, respectively. Plays a role in cell protection against oxidative stress by detoxifying peroxides and as sensor of hydrogen peroxide-mediated signaling events. Protects the cell against the oxidative stress caused by nascent-protein misfolding and aggregation. Relays hydrogen peroxide as a signal to the transcription factor YAP1 by inducing the formation of intramolecular disulfide bonds in YAP1, which causes its nuclear accumulation and activation. Can act alternatively as peroxidase and molecular chaperone. Oxidative stress and heat shock exposure cause a reversible shift of the protein structure from low MW species to high MW complexes, triggering a peroxidase-to-chaperone functional switch. The chaperone function of the protein enhances resistance to heat shock. This is Peroxiredoxin TSA1 from Saccharomyces cerevisiae (strain ATCC 204508 / S288c) (Baker's yeast).